Consider the following 347-residue polypeptide: MNFENKEIKLETKKTILFKNIVELYLRTGKPIGSKFLVEQDYGLGKSSATIRNMMHEFEEIGLLEKSHISSGRIPSTLGLKYYVKYLANSEDSDLKKQLKKLFFQRKLTIDETIELAAKSISEIVGLTMVTSTENSFETLKSIQLVLLDKNESIIIIVLSSGKVISKKLAMKDSIVLDDLRIAVRIFKERLIDTKVSELHEKTLALKPILKISIQNYEDILQEFIINIFDFEVSQTNNVYGKKNIILARDIKREDLTKIIKLIESTSIWQTIEDNLEEEENIKIEIRPDNSSFLSKKISIDNKIREISVVGSKKMDYAKAKSALMLIEDLVEENKKKEKGNNEDNEE.

It belongs to the HrcA family.

In terms of biological role, negative regulator of class I heat shock genes (grpE-dnaK-dnaJ and groELS operons). Prevents heat-shock induction of these operons. This is Heat-inducible transcription repressor HrcA from Mycoplasmopsis pulmonis (strain UAB CTIP) (Mycoplasma pulmonis).